Consider the following 116-residue polypeptide: MSFCSFFGGEIFQNHFEPGIYVCAKCGYELFSSRSKYAHSSPWPAFTETIHADSVAKRPEHNRPGAIKVSCGRCGNGLGHEFLNDGPKRGQSRFUIFSSSLKFIPKAEETSASQGQ.

A MsrB domain is found at 1 to 106 (MSFCSFFGGE…FSSSLKFIPK (106 aa)). The Zn(2+) site is built by Cys23, Cys26, Cys71, and Cys74. The Nucleophile role is filled by Sec95. A non-standard amino acid (selenocysteine) is located at residue Sec95.

It belongs to the MsrB Met sulfoxide reductase family. It depends on Zn(2+) as a cofactor. In terms of processing, truncated MSRB1/SEPX1 proteins produced by failed UGA/Sec decoding are ubiquitinated by the CRL2(FEM1C) E3 ubiquitin-protein ligase complex.

The protein resides in the cytoplasm. Its subcellular location is the nucleus. The protein localises to the cytoskeleton. The catalysed reaction is L-methionyl-[protein] + [thioredoxin]-disulfide + H2O = L-methionyl-(R)-S-oxide-[protein] + [thioredoxin]-dithiol. The enzyme catalyses [thioredoxin]-disulfide + L-methionine + H2O = L-methionine (R)-S-oxide + [thioredoxin]-dithiol. Methionine-sulfoxide reductase that specifically reduces methionine (R)-sulfoxide back to methionine. While in many cases, methionine oxidation is the result of random oxidation following oxidative stress, methionine oxidation is also a post-translational modification that takes place on specific residue. Acts as a regulator of actin assembly by reducing methionine (R)-sulfoxide mediated by MICALs (MICAL1, MICAL2 or MICAL3) on actin, thereby promoting filament repolymerization. Plays a role in innate immunity by reducing oxidized actin, leading to actin repolymerization in macrophages. The protein is Methionine-R-sulfoxide reductase B1 (MSRB1) of Bos taurus (Bovine).